Consider the following 336-residue polypeptide: MYYSLVRKALFRLDPERAHDFTFRQLKRLSHSPFQFLIQQSLPAKPVSCMGLSFKNPLGLAAGLDKNGDCIDALGAMGFGFIEVGTVTPRAQVGNDKPRLFRLVEAEGLINRMGFNNLGVDNLIENVKQSQYGGVLGINIGKNKDTPVEQGKDDYLICMEKVYPYAGYIAINISSPNTPGLRTLQYGEALDDLLSAIKNKQLELQGKYQKYVPVAVKIAPDLTHEELIQVADSLVRHHIDGVIATNTTLDKSLVSGLDHCNEAGGLSGRPVQSKSTQIIRQLNEELKGALPIIGVGGIDSLTAAREKMDAGASLIQVYSGFIYHGPALIKSIINHI.

FMN contacts are provided by residues 62–66 (AGLDK) and threonine 86. Residue lysine 66 coordinates substrate. 111–115 (NRMGF) lines the substrate pocket. 2 residues coordinate FMN: asparagine 139 and asparagine 172. Substrate is bound at residue asparagine 172. Catalysis depends on serine 175, which acts as the Nucleophile. A substrate-binding site is contributed by asparagine 177. Residues lysine 217 and threonine 245 each coordinate FMN. 246 to 247 (NT) provides a ligand contact to substrate. Residues glycine 268, glycine 297, and 318-319 (YS) each bind FMN.

The protein belongs to the dihydroorotate dehydrogenase family. Type 2 subfamily. As to quaternary structure, monomer. It depends on FMN as a cofactor.

It localises to the cell membrane. The catalysed reaction is (S)-dihydroorotate + a quinone = orotate + a quinol. It functions in the pathway pyrimidine metabolism; UMP biosynthesis via de novo pathway; orotate from (S)-dihydroorotate (quinone route): step 1/1. Catalyzes the conversion of dihydroorotate to orotate with quinone as electron acceptor. This Proteus mirabilis (strain HI4320) protein is Dihydroorotate dehydrogenase (quinone).